A 183-amino-acid chain; its full sequence is Dual-action ribosomal maturation protein DarP (183 aa).

This sequence belongs to the DarP family.

Its subcellular location is the cytoplasm. In terms of biological role, member of a network of 50S ribosomal subunit biogenesis factors which assembles along the 30S-50S interface, preventing incorrect 23S rRNA structures from forming. Promotes peptidyl transferase center (PTC) maturation. The polypeptide is Dual-action ribosomal maturation protein DarP (Salmonella arizonae (strain ATCC BAA-731 / CDC346-86 / RSK2980)).